Here is a 304-residue protein sequence, read N- to C-terminus: Glutaminase (304 aa).

7 residues coordinate substrate: S63, N114, E158, N165, Y189, Y240, and V258.

The protein belongs to the glutaminase family. Homotetramer.

It carries out the reaction L-glutamine + H2O = L-glutamate + NH4(+). In Shewanella loihica (strain ATCC BAA-1088 / PV-4), this protein is Glutaminase.